Here is a 309-residue protein sequence, read N- to C-terminus: Probable ABC transporter permease protein YqgH (309 aa).

Helical transmembrane passes span 30-50, 88-108, 133-153, 165-185, 214-234, and 280-300; these read MIVTACALIMIAASVAITIFL, FIFGSFAVTILSALIAAPLGI, LVGIPSVVYGFIGLTVLVPFI, LLAGTIVLSVMILPTITSISA, LVPAAFPTLMTAVVLGMARAF, and NTLWSMGLVLLVMSFLFILLI. Residues 89–300 form the ABC transmembrane type-1 domain; the sequence is IFGSFAVTIL…VMSFLFILLI (212 aa).

It belongs to the binding-protein-dependent transport system permease family. CysTW subfamily.

The protein resides in the cell membrane. Functionally, part of the binding-protein-dependent transport system YqgGHIJK. Probably responsible for the translocation of the substrate across the membrane. This chain is Probable ABC transporter permease protein YqgH (yqgH), found in Bacillus subtilis (strain 168).